Consider the following 41-residue polypeptide: Cytochrome b559 subunit beta (41 aa).

Residues 16–32 traverse the membrane as a helical segment; it reads WLAVHALAIPTVFFLGS. H20 is a binding site for heme.

This sequence belongs to the PsbE/PsbF family. In terms of assembly, heterodimer of an alpha subunit and a beta subunit. PSII is composed of 1 copy each of membrane proteins PsbA, PsbB, PsbC, PsbD, PsbE, PsbF, PsbH, PsbI, PsbJ, PsbK, PsbL, PsbM, PsbT, PsbY, PsbZ, Psb30/Ycf12, at least 3 peripheral proteins of the oxygen-evolving complex and a large number of cofactors. It forms dimeric complexes. Heme b is required as a cofactor.

It localises to the plastid. The protein resides in the chloroplast thylakoid membrane. In terms of biological role, this b-type cytochrome is tightly associated with the reaction center of photosystem II (PSII). PSII is a light-driven water:plastoquinone oxidoreductase that uses light energy to abstract electrons from H(2)O, generating O(2) and a proton gradient subsequently used for ATP formation. It consists of a core antenna complex that captures photons, and an electron transfer chain that converts photonic excitation into a charge separation. This chain is Cytochrome b559 subunit beta, found in Euglena gracilis.